The chain runs to 525 residues: GMP synthase [glutamine-hydrolyzing] (525 aa).

One can recognise a Glutamine amidotransferase type-1 domain in the interval 12 to 203 (TVLVVDFGAQ…LYRGAGLTPS (192 aa)). Catalysis depends on Cys89, which acts as the Nucleophile. Catalysis depends on residues His177 and Glu179. The GMPS ATP-PPase domain occupies 204 to 399 (WTTGNVIDEQ…LGLPDEIVQR (196 aa)). Residue 231 to 237 (SGGVDSA) participates in ATP binding.

As to quaternary structure, homodimer.

It catalyses the reaction XMP + L-glutamine + ATP + H2O = GMP + L-glutamate + AMP + diphosphate + 2 H(+). It functions in the pathway purine metabolism; GMP biosynthesis; GMP from XMP (L-Gln route): step 1/1. In terms of biological role, catalyzes the synthesis of GMP from XMP. This chain is GMP synthase [glutamine-hydrolyzing], found in Streptomyces avermitilis (strain ATCC 31267 / DSM 46492 / JCM 5070 / NBRC 14893 / NCIMB 12804 / NRRL 8165 / MA-4680).